A 128-amino-acid polypeptide reads, in one-letter code: Large ribosomal subunit protein bL12 (128 aa).

As to quaternary structure, homodimer. Part of the 50S ribosomal subunit; present in 6 copies per ribosome. Forms part of the ribosomal stalk which helps the ribosome interact with GTP-bound translation factors. Forms a heptameric L10(L12)2(L12)2(L12)2 complex, where L10 forms an elongated spine to which 3 L12 dimers bind in a sequential fashion.

Its function is as follows. Forms part of the ribosomal stalk which helps the ribosome interact with GTP-bound translation factors. Is thus essential for accurate translation. This is Large ribosomal subunit protein bL12 from Thermotoga maritima (strain ATCC 43589 / DSM 3109 / JCM 10099 / NBRC 100826 / MSB8).